The sequence spans 219 residues: Glycosylphosphatidylinositol anchor biosynthesis protein 11 (219 aa).

Over 1-45 the chain is Cytoplasmic; sequence MPAKKRTRKTVKKTVSFSDDTTLTTHQNREKKNVDHDRPPVYVRK. Residue Ser-16 is modified to Phosphoserine. The chain crosses the membrane as a helical span at residues 46–66; that stretch reads TPLMTFPYHLVALLYYYVFVS. Ser-67 is a topological domain (lumenal). Residues 68–88 form a helical membrane-spanning segment; it reads NFNTVKLLSFLIPTQVAYLVL. At 89-108 the chain is on the cytoplasmic side; sequence QFNKCTVYGNKIIKINYSLT. The helical transmembrane segment at 109–129 threads the bilayer; the sequence is IICLGVTFLLSFPTMLLTILF. Residues 130-135 are Lumenal-facing; that stretch reads GAPLMD. Residues 136–156 traverse the membrane as a helical segment; the sequence is LLWETWLLSLHFAFLAYPAVY. The Cytoplasmic segment spans residues 157–170; sequence SVFNCDFKVGLWKK. The helical transmembrane segment at 171 to 191 threads the bilayer; sequence YFIFIVVGGWISCVVIPLDWD. The Lumenal segment spans residues 192–198; the sequence is RDWQNWP. Residues 199-217 traverse the membrane as a helical segment; that stretch reads IPIVVGGYLGALVGYTIGA. Residues 218–219 lie on the Cytoplasmic side of the membrane; it reads YI.

It belongs to the PIGF family.

The protein localises to the endoplasmic reticulum membrane. Its pathway is glycolipid biosynthesis; glycosylphosphatidylinositol-anchor biosynthesis. Its function is as follows. Acts in the GPI biosynthetic pathway between GlcNAc-PI synthesis and GPI transfer to protein. Required for the formation of complete GPI precursors CP1 and CP2. The sequence is that of Glycosylphosphatidylinositol anchor biosynthesis protein 11 (GPI11) from Saccharomyces cerevisiae (strain ATCC 204508 / S288c) (Baker's yeast).